The primary structure comprises 282 residues: MSSANQSIPVLVAGAMGRMGSEVVKAINSSKDFQLVGAIDNQKDKEGQDIGSLLGLGELDVFLSSDFEGSLCAASQNVPKDGSNNGAVLVDFTHPKFAYKHTRTSIAYGVHPVIGTTGITADQLDDLSKFADKASLGSAIIPNFSVGMVLLQQAAAAAARFYEFAELTEMHHNKKADAPSGTCIKTAELIEEQRSNFNRSFVEEEESIKGSRGGSRASGLRLHSVRLPGLVAHQQVMFGSNGETYELSHNTIDRSAYMPGVLLVIKKIRSFNKLVYGLEKIL.

Residues 14-19 (GAMGRM) and 115-117 (GTT) each bind NAD(+). Histidine 171 acts as the Proton donor/acceptor in catalysis. Histidine 172 is a (S)-2,3,4,5-tetrahydrodipicolinate binding site. Lysine 175 (proton donor) is an active-site residue. (S)-2,3,4,5-tetrahydrodipicolinate is bound at residue 181 to 182 (GT).

The protein belongs to the DapB family.

It is found in the cytoplasm. The enzyme catalyses (S)-2,3,4,5-tetrahydrodipicolinate + NAD(+) + H2O = (2S,4S)-4-hydroxy-2,3,4,5-tetrahydrodipicolinate + NADH + H(+). It carries out the reaction (S)-2,3,4,5-tetrahydrodipicolinate + NADP(+) + H2O = (2S,4S)-4-hydroxy-2,3,4,5-tetrahydrodipicolinate + NADPH + H(+). It functions in the pathway amino-acid biosynthesis; L-lysine biosynthesis via DAP pathway; (S)-tetrahydrodipicolinate from L-aspartate: step 4/4. In terms of biological role, catalyzes the conversion of 4-hydroxy-tetrahydrodipicolinate (HTPA) to tetrahydrodipicolinate. This is 4-hydroxy-tetrahydrodipicolinate reductase from Prochlorococcus marinus (strain NATL2A).